The primary structure comprises 31 residues: Alpha-conotoxin Li1.12 (31 aa).

The propeptide occupies A1–R15. Cystine bridges form between C17-C23 and C18-C30. C30 carries the cysteine amide modification.

It belongs to the conotoxin A superfamily. In terms of tissue distribution, expressed by the venom duct.

Its subcellular location is the secreted. Its function is as follows. Alpha-conotoxins act on postsynaptic membranes, they bind to the nicotinic acetylcholine receptors (nAChR) and thus inhibit them. This toxin inhibits alpha-3-beta-4, alpha-6/alpha-3-beta-4, and alpha-2-beta-4 nAChRs. This chain is Alpha-conotoxin Li1.12, found in Conus lividus (Livid cone).